Here is a 501-residue protein sequence, read N- to C-terminus: Lysine--tRNA ligase (501 aa).

2 residues coordinate Mg(2+): E412 and E419.

Belongs to the class-II aminoacyl-tRNA synthetase family. In terms of assembly, homodimer. Requires Mg(2+) as cofactor.

The protein localises to the cytoplasm. It catalyses the reaction tRNA(Lys) + L-lysine + ATP = L-lysyl-tRNA(Lys) + AMP + diphosphate. The polypeptide is Lysine--tRNA ligase (Chlorobium luteolum (strain DSM 273 / BCRC 81028 / 2530) (Pelodictyon luteolum)).